We begin with the raw amino-acid sequence, 160 residues long: MRVVVIAIGRLKQGPERELAERYRERFDDLGRKLGFRGPEIHEIGESRARDAPTRIAEEAAAIAALIPDKAVLVTLDERGDSLDSAGFARKLGGWRDQSTAQAIFVIGGADGLSPELRRKAKLSVSFGAATWPHQMVRVMLLEQLYRAATILSGHPYHRA.

The S-adenosyl-L-methionine site is built by leucine 76 and glycine 108.

Belongs to the RNA methyltransferase RlmH family. In terms of assembly, homodimer.

Its subcellular location is the cytoplasm. The enzyme catalyses pseudouridine(1915) in 23S rRNA + S-adenosyl-L-methionine = N(3)-methylpseudouridine(1915) in 23S rRNA + S-adenosyl-L-homocysteine + H(+). In terms of biological role, specifically methylates the pseudouridine at position 1915 (m3Psi1915) in 23S rRNA. This is Ribosomal RNA large subunit methyltransferase H from Rhodopseudomonas palustris (strain BisB18).